A 123-amino-acid polypeptide reads, in one-letter code: MATINQLVRKPRKRKAKTSDVRALEACPQRRGVCTRVYTTTPKKPNSALRKVCRVRLTNGFEVSSYIGGEGHNLQEHSVVLIRGGRVKDLPGVRYHTVRGALDTSGVNDRKRGRSKYGTKRPK.

A disordered region spans residues 1 to 22 (MATINQLVRKPRKRKAKTSDVR). A 3-methylthioaspartic acid modification is found at Asp89. Residues 101-123 (ALDTSGVNDRKRGRSKYGTKRPK) are disordered. A compositionally biased stretch (basic residues) spans 111-123 (KRGRSKYGTKRPK).

It belongs to the universal ribosomal protein uS12 family. As to quaternary structure, part of the 30S ribosomal subunit. Contacts proteins S8 and S17. May interact with IF1 in the 30S initiation complex.

Functionally, with S4 and S5 plays an important role in translational accuracy. In terms of biological role, interacts with and stabilizes bases of the 16S rRNA that are involved in tRNA selection in the A site and with the mRNA backbone. Located at the interface of the 30S and 50S subunits, it traverses the body of the 30S subunit contacting proteins on the other side and probably holding the rRNA structure together. The combined cluster of proteins S8, S12 and S17 appears to hold together the shoulder and platform of the 30S subunit. This is Small ribosomal subunit protein uS12 from Teredinibacter turnerae (strain ATCC 39867 / T7901).